Reading from the N-terminus, the 290-residue chain is Probable aquaporin PIP2-1 (290 aa).

A run of 2 helical transmembrane segments spans residues 43-63 (AVIAEFIATLLFLYITVATVI) and 80-100 (CGGVGVLGIAWAFGGMIFILV). The NPA 1 signature appears at 112-114 (NPA). 3 consecutive transmembrane segments (helical) span residues 131-151 (ILYIVAQCLGAICGVGLVKAF), 173-193 (GTGLAAEIIGTFVLVYTVFSA), and 207-227 (VLAPLPIGFAVFMVHLATIPI). The NPA 2 motif lies at 233 to 235 (NPA). The chain crosses the membrane as a helical span at residues 255 to 275 (IFWVGPFVGAAIAAFYHQYIL).

It belongs to the MIP/aquaporin (TC 1.A.8) family. PIP (TC 1.A.8.11) subfamily. As to expression, expressed in roots, leaves and anthers.

Its subcellular location is the cell membrane. Its function is as follows. Aquaporins facilitate the transport of water and small neutral solutes across cell membranes. This Oryza sativa subsp. japonica (Rice) protein is Probable aquaporin PIP2-1 (PIP2-1).